The chain runs to 193 residues: Bcl-2-binding component 3 (193 aa).

Disordered stretches follow at residues 1–32 and 71–131; these read MARA…RLMP and ALGG…VEEE. The residue at position 10 (Ser-10) is a Phosphoserine. The short motif at 137-151 is the BH3 element; it reads IGAQLRRMADDLNAQ.

Belongs to the Bcl-2 family. As to quaternary structure, interacts with MCL1 and BCL2A1. Interacts (via BH3 domain) with BCL2 and BCL2L1/BCL-XL. Interacts (via BH3 domain) with NOL3/ARC (via CARD domain); this interaction prevents BBC3 association with BCL2 and results in CASP8 activation.

Its subcellular location is the mitochondrion. Essential mediator of p53/TP53-dependent and p53/TP53-independent apoptosis. Promotes partial unfolding of BCL2L1 and dissociation of BCL2L1 from p53/TP53, releasing the bound p53/TP53 to induce apoptosis. Regulates ER stress-induced neuronal apoptosis. The sequence is that of Bcl-2-binding component 3 (Bbc3) from Rattus norvegicus (Rat).